The primary structure comprises 113 residues: uncharacterized protein (113 aa).

To M.jannaschii MJ0886 C-terminal region.

This is an uncharacterized protein from Clostridium pasteurianum.